The primary structure comprises 104 residues: Glutaredoxin (104 aa).

A Glutaredoxin domain is found at Met-3–Lys-103. An intrachain disulfide couples Cys-23 to Cys-26.

The protein belongs to the glutaredoxin family. CPYC subfamily.

The protein localises to the cytoplasm. Its function is as follows. Has a glutathione-disulfide oxidoreductase activity in the presence of NADPH and glutathione reductase. Reduces low molecular weight disulfides and proteins. The sequence is that of Glutaredoxin from Vernicia fordii (Tung).